The sequence spans 212 residues: MKGKFIVIEGIDGCGKTTQIDELSKWLPNSGLIKKGSKLITTREPGGSLLGKKLRGLILDNNKNNKPSSLAELLLYSADRAEHVSKIISPALNNNDWVISDRFSDSTLAYQGYGRNINLEIIKNIESIVCQGASPDLTFFLEISPEESIFRRKNEIPDRIESEGIRFLEKVNEGFKLIAKQKNWKVISASQNIQTISNQIKETLLNNFSNNK.

An ATP-binding site is contributed by 10 to 17 (GIDGCGKT).

Belongs to the thymidylate kinase family.

The enzyme catalyses dTMP + ATP = dTDP + ADP. In terms of biological role, phosphorylation of dTMP to form dTDP in both de novo and salvage pathways of dTTP synthesis. This is Thymidylate kinase from Prochlorococcus marinus (strain AS9601).